An 80-amino-acid polypeptide reads, in one-letter code: Defensin-like protein 276 (80 aa).

A signal peptide spans 1–24; the sequence is MSGQKYQLVSLLLIICLLFSQSTA. Intrachain disulfides connect C27/C67, C33/C55, C39/C65, and C43/C66.

The protein belongs to the DEFL family.

The protein localises to the secreted. The protein is Defensin-like protein 276 of Arabidopsis thaliana (Mouse-ear cress).